Reading from the N-terminus, the 376-residue chain is Cytochrome b (376 aa).

4 consecutive transmembrane segments (helical) span residues 28–48 (YGFL…FLAS), 72–94 (WCFR…LHIL), 107–127 (SWIS…VGYV), and 169–189 (FFVL…IHIF). Heme b-binding residues include H78 and H92. H173 and H187 together coordinate heme b. Residue H192 participates in a ubiquinone binding. 4 helical membrane-spanning segments follow: residues 214 to 234 (LLSL…IQSL), 274 to 294 (VPSK…LFLL), 317 to 337 (VPII…CQLP), and 340 to 360 (IFIL…LFVL).

This sequence belongs to the cytochrome b family. As to quaternary structure, the main subunits of complex b-c1 are: cytochrome b, cytochrome c1 and the Rieske protein. The cofactor is heme b.

The protein localises to the mitochondrion inner membrane. Component of the ubiquinol-cytochrome c reductase complex (complex III or cytochrome b-c1 complex) that is part of the mitochondrial respiratory chain. The b-c1 complex mediates electron transfer from ubiquinol to cytochrome c. Contributes to the generation of a proton gradient across the mitochondrial membrane that is then used for ATP synthesis. In Plasmodium falciparum, this protein is Cytochrome b (MT-CYB).